A 433-amino-acid chain; its full sequence is Enolase (433 aa).

Position 167 (Q167) interacts with (2R)-2-phosphoglycerate. The active-site Proton donor is E209. Mg(2+) contacts are provided by D246, E291, and D318. K343, R372, S373, and K394 together coordinate (2R)-2-phosphoglycerate. The active-site Proton acceptor is the K343.

This sequence belongs to the enolase family. As to quaternary structure, component of the RNA degradosome, a multiprotein complex involved in RNA processing and mRNA degradation. Mg(2+) is required as a cofactor.

Its subcellular location is the cytoplasm. The protein localises to the secreted. It localises to the cell surface. It carries out the reaction (2R)-2-phosphoglycerate = phosphoenolpyruvate + H2O. It functions in the pathway carbohydrate degradation; glycolysis; pyruvate from D-glyceraldehyde 3-phosphate: step 4/5. Functionally, catalyzes the reversible conversion of 2-phosphoglycerate (2-PG) into phosphoenolpyruvate (PEP). It is essential for the degradation of carbohydrates via glycolysis. The sequence is that of Enolase from Marinomonas sp. (strain MWYL1).